A 377-amino-acid chain; its full sequence is Protein-glutamate methylesterase/protein-glutamine glutaminase 1 (377 aa).

One can recognise a Response regulatory domain in the interval 4–121 (KVLVVDDSSF…ARNRDEAVTL (118 aa)). Asp-55 carries the post-translational modification 4-aspartylphosphate. Residues 138–170 (RPAAPRPAPTTSIAASSSLSQERAAATSPLGNR) are disordered. Low complexity predominate over residues 146-157 (PTTSIAASSSLS). The CheB-type methylesterase domain occupies 184–377 (SGKKYQLTAI…ERMLVEVGLA (194 aa)). Residues Ser-196, His-223, and Asp-319 contribute to the active site.

This sequence belongs to the CheB family. In terms of processing, phosphorylated by CheA. Phosphorylation of the N-terminal regulatory domain activates the methylesterase activity.

The protein resides in the cytoplasm. The catalysed reaction is [protein]-L-glutamate 5-O-methyl ester + H2O = L-glutamyl-[protein] + methanol + H(+). It catalyses the reaction L-glutaminyl-[protein] + H2O = L-glutamyl-[protein] + NH4(+). Involved in chemotaxis. Part of a chemotaxis signal transduction system that modulates chemotaxis in response to various stimuli. Catalyzes the demethylation of specific methylglutamate residues introduced into the chemoreceptors (methyl-accepting chemotaxis proteins or MCP) by CheR. Also mediates the irreversible deamidation of specific glutamine residues to glutamic acid. The chain is Protein-glutamate methylesterase/protein-glutamine glutaminase 1 from Vibrio cholerae serotype O1 (strain ATCC 39315 / El Tor Inaba N16961).